We begin with the raw amino-acid sequence, 501 residues long: Aldehyde dehydrogenase 1A1 (501 aa).

S2 carries the N-acetylserine modification. K91 and K128 each carry N6-acetyllysine. Residues 167–170, 193–196, 226–227, and 246–247 contribute to the NAD(+) site; these read IPWN, KPAE, GP, and GS. K252 carries the post-translational modification N6-acetyllysine. E269 serves as the catalytic Proton acceptor. NAD(+) is bound at residue 269 to 271; that stretch reads ELG. The Nucleophile role is filled by C303. Residues 336–501 are mediates interaction with PRMT3; it reads LTPGATQGPQ…VTVKISQKNS (166 aa). T337 bears the Phosphothreonine mark. Residue 349 to 353 coordinates NAD(+); the sequence is EQYDK. K353 and K367 each carry N6-acetyllysine. NAD(+) is bound at residue 400–402; sequence EIF. The residue at position 410 (K410) is an N6-acetyllysine. At S413 the chain carries Phosphoserine. 2 positions are modified to N6-acetyllysine: K419 and K495.

This sequence belongs to the aldehyde dehydrogenase family. In terms of assembly, homotetramer. Interacts with PRMT3; the interaction is direct, inhibits ALDH1A1 aldehyde dehydrogenase activity and is independent of the methyltransferase activity of PRMT3. In terms of processing, the N-terminus is blocked most probably by acetylation.

The protein resides in the cytoplasm. The protein localises to the cytosol. It localises to the cell projection. It is found in the axon. The catalysed reaction is an aldehyde + NAD(+) + H2O = a carboxylate + NADH + 2 H(+). The enzyme catalyses all-trans-retinal + NAD(+) + H2O = all-trans-retinoate + NADH + 2 H(+). It carries out the reaction 9-cis-retinal + NAD(+) + H2O = 9-cis-retinoate + NADH + 2 H(+). It catalyses the reaction 11-cis-retinal + NAD(+) + H2O = 11-cis-retinoate + NADH + 2 H(+). The catalysed reaction is 13-cis-retinal + NAD(+) + H2O = 13-cis-retinoate + NADH + 2 H(+). The enzyme catalyses 3-deoxyglucosone + NAD(+) + H2O = 2-dehydro-3-deoxy-D-gluconate + NADH + 2 H(+). It carries out the reaction (E)-4-hydroxynon-2-enal + NAD(+) + H2O = (E)-4-hydroxynon-2-enoate + NADH + 2 H(+). It catalyses the reaction malonaldehyde + NAD(+) + H2O = 3-oxopropanoate + NADH + 2 H(+). The catalysed reaction is hexanal + NAD(+) + H2O = hexanoate + NADH + 2 H(+). The enzyme catalyses propanal + NAD(+) + H2O = propanoate + NADH + 2 H(+). It carries out the reaction acetaldehyde + NAD(+) + H2O = acetate + NADH + 2 H(+). It catalyses the reaction benzaldehyde + NAD(+) + H2O = benzoate + NADH + 2 H(+). The catalysed reaction is 4-aminobutanal + NAD(+) + H2O = 4-aminobutanoate + NADH + 2 H(+). It functions in the pathway cofactor metabolism; retinol metabolism. Functionally, cytosolic dehydrogenase that catalyzes the irreversible oxidation of a wide range of aldehydes to their corresponding carboxylic acid. Functions downstream of retinol dehydrogenases and catalyzes the oxidation of retinaldehyde into retinoic acid, the second step in the oxidation of retinol/vitamin A into retinoic acid. This pathway is crucial to control the levels of retinol and retinoic acid, two important molecules which excess can be teratogenic and cytotoxic. Also oxidizes aldehydes resulting from lipid peroxidation like (E)-4-hydroxynon-2-enal/HNE, malonaldehyde and hexanal that form protein adducts and are highly cytotoxic. By participating for instance to the clearance of (E)-4-hydroxynon-2-enal/HNE in the lens epithelium prevents the formation of HNE-protein adducts and lens opacification. Also functions downstream of fructosamine-3-kinase in the fructosamine degradation pathway by catalyzing the oxidation of 3-deoxyglucosone, the carbohydrate product of fructosamine 3-phosphate decomposition, which is itself a potent glycating agent that may react with lysine and arginine side-chains of proteins. Also has an aminobutyraldehyde dehydrogenase activity and is probably part of an alternative pathway for the biosynthesis of GABA/4-aminobutanoate in midbrain, thereby playing a role in GABAergic synaptic transmission. The chain is Aldehyde dehydrogenase 1A1 from Macaca fascicularis (Crab-eating macaque).